An 889-amino-acid polypeptide reads, in one-letter code: DNA gyrase subunit A (889 aa).

Residues 35-501 (LPDVRDGLKP…GFEDLEDEDL (467 aa)) form the Topo IIA-type catalytic domain. Tyr123 functions as the O-(5'-phospho-DNA)-tyrosine intermediate in the catalytic mechanism. Positions 528–534 (QNRGGRG) match the GyrA-box motif. Residues 811 to 889 (KEDAEDETNE…IQQSLDEDEE (79 aa)) form a disordered region. A compositionally biased stretch (acidic residues) spans 813–823 (DAEDETNEDEQ). Residues 863–875 (DGRIEVRQDFMDR) show a composition bias toward basic and acidic residues. A compositionally biased stretch (acidic residues) spans 876 to 889 (VEEDIQQSLDEDEE).

It belongs to the type II topoisomerase GyrA/ParC subunit family. Heterotetramer, composed of two GyrA and two GyrB chains. In the heterotetramer, GyrA contains the active site tyrosine that forms a transient covalent intermediate with DNA, while GyrB binds cofactors and catalyzes ATP hydrolysis.

The protein localises to the cytoplasm. The catalysed reaction is ATP-dependent breakage, passage and rejoining of double-stranded DNA.. A type II topoisomerase that negatively supercoils closed circular double-stranded (ds) DNA in an ATP-dependent manner to modulate DNA topology and maintain chromosomes in an underwound state. Negative supercoiling favors strand separation, and DNA replication, transcription, recombination and repair, all of which involve strand separation. Also able to catalyze the interconversion of other topological isomers of dsDNA rings, including catenanes and knotted rings. Type II topoisomerases break and join 2 DNA strands simultaneously in an ATP-dependent manner. The protein is DNA gyrase subunit A of Staphylococcus aureus.